The following is a 144-amino-acid chain: Phospholipase A2 (144 aa).

Positions 1–15 (MKFLVLAALLTAGTA) are cleaved as a signal peptide. A propeptide spans 16 to 22 (ASGVSPT) (activation peptide). Cystine bridges form between Cys-33/Cys-99, Cys-49/Cys-144, Cys-51/Cys-67, Cys-66/Cys-127, Cys-73/Cys-120, Cys-83/Cys-113, and Cys-106/Cys-118. Residues Tyr-50, Gly-52, and Gly-54 each contribute to the Ca(2+) site. The active site involves His-70. A Ca(2+)-binding site is contributed by Asp-71. Residue Asp-121 is part of the active site.

This sequence belongs to the phospholipase A2 family. As to quaternary structure, monomer or homodimer. It depends on Ca(2+) as a cofactor. Activated by trypsin cleavage in the duodenum. Can also be activated by thrombin or autocatalytically.

The protein localises to the secreted. It catalyses the reaction a 1,2-diacyl-sn-glycero-3-phosphocholine + H2O = a 1-acyl-sn-glycero-3-phosphocholine + a fatty acid + H(+). It carries out the reaction 1,2-ditetradecanoyl-sn-glycero-3-phosphocholine + H2O = 1-tetradecanoyl-sn-glycero-3-phosphocholine + tetradecanoate + H(+). The enzyme catalyses 1,2-dihexadecanoyl-sn-glycero-3-phosphocholine + H2O = 1-hexadecanoyl-sn-glycero-3-phosphocholine + hexadecanoate + H(+). The catalysed reaction is 1-hexadecanoyl-2-(9Z-octadecenoyl)-sn-glycero-3-phosphocholine + H2O = 1-hexadecanoyl-sn-glycero-3-phosphocholine + (9Z)-octadecenoate + H(+). It catalyses the reaction 1-hexadecanoyl-2-(5Z,8Z,11Z,14Z-eicosatetraenoyl)-sn-glycero-3-phosphocholine + H2O = 1-hexadecanoyl-sn-glycero-3-phosphocholine + (5Z,8Z,11Z,14Z)-eicosatetraenoate + H(+). It carries out the reaction 1-hexadecanoyl-2-(9Z-octadecenoyl)-sn-glycero-3-phospho-(1'-sn-glycerol) + H2O = 1-hexadecanoyl-sn-glycero-3-phospho-(1'-sn-glycerol) + (9Z)-octadecenoate + H(+). The enzyme catalyses N-hexadecanoyl-1,2-di-(9Z-octadecenoyl)-sn-glycero-3-phosphoethanolamine + H2O = N-hexadecanoyl-1-(9Z-octadecenoyl)-sn-glycero-3-phosphoethanolamine + (9Z)-octadecenoate + H(+). The catalysed reaction is 1-hexadecanoyl-2-(9Z,12Z-octadecadienoyl)-sn-glycero-3-phosphoethanolamine + H2O = 1-hexadecanoyl-sn-glycero-3-phosphoethanolamine + (9Z,12Z)-octadecadienoate + H(+). It catalyses the reaction N,1-dihexadecanoyl-2-(9Z,12Z-octadecadienoyl)-sn-glycero-3-phosphoethanolamine + H2O = N,1-dihexadecanoyl-sn-glycero-3-phosphoethanolamine + (9Z,12Z)-octadecadienoate + H(+). Its function is as follows. Secretory calcium-dependent phospholipase A2 that primarily targets dietary phospholipids in the intestinal tract. Hydrolyzes the ester bond of the fatty acyl group attached at sn-2 position of phospholipids (phospholipase A2 activity) with preference for phosphatidylethanolamines and phosphatidylglycerols over phosphatidylcholines. May play a role in the biosynthesis of N-acyl ethanolamines that regulate energy metabolism and inflammation in the intestinal tract. Hydrolyzes N-acyl phosphatidylethanolamines to N-acyl lysophosphatidylethanolamines, which are further cleaved by a lysophospholipase D to release N-acyl ethanolamines. May act in an autocrine and paracrine manner. Has anti-helminth activity in a process regulated by gut microbiota. Upon helminth infection of intestinal epithelia, directly affects phosphatidylethanolamine contents in the membrane of helminth larvae, likely controlling an array of phospholipid-mediated cellular processes such as membrane fusion and cell division while providing for better immune recognition, ultimately reducing larvae integrity and infectivity. This Oryctolagus cuniculus (Rabbit) protein is Phospholipase A2 (PLA2G1B).